A 62-amino-acid chain; its full sequence is Conotoxin Tx5.1 (62 aa).

Residues methionine 1 to alanine 22 form the signal peptide. A propeptide spanning residues glutamine 23–arginine 49 is cleaved from the precursor. Glutamine 60 carries the glutamine amide modification.

It belongs to the conotoxin T superfamily. In terms of processing, contains 2 disulfide bonds that can be either 'C1-C3, C2-C4' or 'C1-C4, C2-C3', since these disulfide connectivities have been observed for conotoxins with cysteine framework V (for examples, see AC P0DQQ7 and AC P81755). As to expression, expressed by the venom duct.

The protein localises to the secreted. This chain is Conotoxin Tx5.1, found in Conus textile (Cloth-of-gold cone).